The following is a 5121-amino-acid chain: MTSRRLEESMGAVQMGLVNMFKGFQSKVLPPLSPKVVTEEEVNRMLTPSEFLKEMSLTTEQRLAKTRLMCRPQIIELLDMGETTHQKFSGIDLDQALFQPFPSEIIFQNYTPCEVYEVPLILRNNDKIPRLVKVVEESSPYFKVISPKDIGHKVAPGVPSIFRILFTPEENKDYAHTLTCVTEREKFIVPIKARGARAILDFPDKLNFSTCPVKYSTQKILLVRNIGNKNAVFHIKTCRPFSIEPAIGTLNVGESMQLEVEFEPQSVGDHSGRLIVCYDTGEKVFVSLYGAAIDMNIRLDKNSLTIEKTYISLANQRTITIHNRSNIIAHFLWKVFATQQEEDREKYRACDDLIKEEKDETDEFFEECITDPLLREHLSVLSRTFANQRRLVQGDSKLFFNNVFTVEPLEGDVWPNSSAEITVYFNPLEAKLYQQTIYCDILGREIRLPLRIKGEGMGPKIHFNFELLDIGKVFTGSAHCYEAILYNKGSIDALFNMTPPTSALGACFVFSPKEGIIEPSGVQAIQISFSSTILGNFEEEFLVNVNGSPEPVKLTIRGCVIGPTFHFNVPALHFGDVSFGFPHTLICSLNNTSLIPMTYKLRIPGDGLGHKSISYCEQHVDYKRPSWTKEEISSMKPKEFTISPDCGTIRPQGFAAIRVTLCSNTVQKYELALVVDVEGIGEEVLALLITARCVVPALHLVNTEVDFGHCFLKYPYEKTLQLANQDDLPGFYEVQPQVCEEVPTVLFSSPTPSGVISPSSTIHIPLVLETQVTGEHRSTVYISIFGSQDPPLVCHLKSAGEGPVIYVHPNQVDFGNIYVLKDSSRILNLCNQSFIPAFFQAHMAHKKSLWTIEPNEGMVPPETDVQLALTANLNDTLTFKDCVILDIENSSTYRIPVQASGTGSTIVSDKPFAPELNLGAHFSLDTHYYHFKLINKGRRIQQLFWMNDSFRPQAKLSKKGRVKKGHAHVQPQPSGSQEPRDPQSPVFHLHPASMELYPGQAIDVILEGYSATPRIVKEKLVCHAIIGAQKGKSLVMAVNITCEFVAPLIQLSTKQLIYRLEKKPNSILKPDYQPLAIKNISTLPVNLLLSTSGPFFICETDKSLLPATPEPIKLEIDEEKNLLIKFDPSYRNDLNNWVAEEILAIKYVEHPQIDSLDLRGEVHYPNLSFETKELDFGCILNDTELIRYVTITNCSPLVVKFRWFFLVNDEENQIRFVTLPKKPYSAPVSQMESIPATSEAASPPAILVTVESPEMDLNDFVKTVLVDEDARPEEKELRKTKASSVISDEIKISSTEIERIYSSQSQVEDQESLQTCEQNEMLSIGIEEVFDILPLFGVLQPHSSHQISFTFYGHANIIAQAKALCEVEEGPTYEITLKGEASLVNYSFDTKDIHYGLQLFDHVTEREITLTNMGKVGFEFKVLTDHQSSPDNLLPGVPLILPVSGFISSHQEQVLKVYYLPGVPEVFKRSFQIQIAHLDPENITLSGEGIFPQICLDLPRNLTANEKYEMFLNQARKNTDKEYNKCEMLDHFDIITEEVPEDEPAEVSAHLQMEVERLIVQSYVLEHQKTTTPDPMDDPCFSHRSRRKLAKIQLPEYILDFGYIILGEVRTHIIKIINTSHFPVSFHADKRVLHETGFSTELDRVKNLPHCETEIFEVRFDPQGANLPVGSKEVILPIKVVGGPTVHICLQAKVTIPTMTLSRGKVDFATIQCGQCLVETIQLSNHLQVPCEWFVQSQKPVDKLEKHMPKYLRQKLRAELKPKTRIFEIQPISGVLDPGEKSNVQVKFMPKEEKFYSQTLVFQIAQSAQKLTLLARGQGLEPRLEFSPSVLDLGPLLLCAPGDEAEVIVKNPCNFPIEFYSLEFDQQYLIEEKILRKLKGYDSYNTLLLPPRNPGEKLPPELYEYFKEIKKSKEEQMRAKYLENLAQENEEEDITSSDQGTSNSTKRTSLSRGISVTSNLEEWHALLVESKTYLEEEEDEESLEKIIFQTDKLQSIDSHSMEEVGEVENNPVSKAIARHLGIDISAEGRLAKNRKGIAIIIHGTPLSGKSANAVSVAKYYNAACLSIDSIVLEAVANSNNIPGIRARELCIRAAIEQSVKEGEEAAQEAAVGQNVIGQGRLSTDTLGKLASEMTLVAPEIKPGKSVRGSVVITKSKADSHGSGSQKQHHSHQSETPQISSSPLPPGPIHRWLSVSPSVGGETGLMSCVLPDELLVQILAERIQLSDCYRGVVFDGLDTLFAQNAAAALLCLLKAIGSREHIYILNMAQDYAAMKAQEKAKKEQEERKHKGALEKEKERLQNMDEEEYDALTEEEKLTFDRGIQQALRERKKREQERLAKEMQEKKLQQELERQKEEDELKRRVKKGKQGPIKEEPPMKKSQAANKQVPPLTKVDVKMETIERKISVREQTMSEKEELNKKKRNMGDVSMHGLPLVQDQEDSEGDNSKDPDKQLAPKFKTYELTLKDVQNILMYWDRKQGVQLPPAGMEEAPHEPDDQRQVPLGGRRGRKDRERERLEKERTEKERLEREKAERERLEKLRALEERSDWEGEGEEDHEGKKEKDLGVPFLDIQTPDFEGLSWKQALESDKLPKGEQILDILGLGASGPPIPPPALFSIVSYPVKRPPLTMTDDLEHFVFVIPPSEDISLDEKKEMEIESDFLATTNTTKAQEEQTSSSKGGKQKMKEKIDQVFEIQKDKRHMALNRKVLSGEPAGTISQLSDTDLDNFNGQHSQEKFTRLNHFRWIVPANGEVTLQVHFSSDEFGNFDQTFNFEILGTCCQYQLYCRGICTYPYICQDPKVVFPQRKMDMKTNEVIFKKYVMSTETYYFGPLLCGKSRDKYKSSLFPGNMETLTILNTSLMVVEASFYFQNDVKANTYFLEPNTMVLKPNEKQILNVWAYPTSVGVFEDSIVCCINDNPEPAIFQLSCQGIRPELELEPRQLHFDRLLLHRQESRVVLLRNVTLLPVAWRITSLEHLGDDFTVSLMQGTIPPEAEYGLHLYFQPTKPVNIKKAIRLEVLDAENLLGVVQIENIMVFAEAYDIALDITFPKGAEGGLDFGIVRVTEEAKQPLQLKNRGKYEIAFSFSVDSVGISTPNINSMISVQPKKGSLTPTEKPTNVQVFFHAKKEVKIEHQPVLRCQIIEPNISEGGEIIASIPIKFSANAVYSKYNITPSSVINFGALICGTRKSTTFTIENQGVTDFKFALYKLTGESPIHQKKAASHVRHARSRESESFYKTGSSRAAKFSDTIQKEVTTTGQARFAHGMFTVYPGFGSIPSGGQQVINVDCVADAMGKCEEFIAIDISGRDPAVHPAGILYTLLAEACLPAFVTENNALIFEEHQICTSANLHHILQTIESGGLFVEDENKFIFCNVLVGRQAKARFKISNVGKITCDVNIVVRPISNKPFARIVDIFEVEPSKMCIASHSHAFATVSFTPQIMQNYQCIFEATLDGLPSTLAKSRGLVFDIAGEGNLPRVTVVRPVLHNQYGNPLLLFKRLLLGHSEKLPLILKNNGVLPAQLHVDLQDELGVFSLKGRPTTAYIYITEENKPHVKAKKAHTASLVVSPGDTAEFDVVFHSQKVGRMRGIIHLSVINNQYEETSIHMVGEGYEDDITLDNIHGLVAPTSQEDISISEFTEIIEDNDMEDLVAAALVDHIQFGDCHIGHSYNASFTVTNHSQVNLIRFEWPVSATIAFSPQMGHLHPGCAKDIVVTMKSDVPINLKNMRIRCKLSRIMFQLPADQVPDWDDRMHTVKWVDVPRNMPGTFTTKRKVIETDPEPAHSVLEENYQELQLQISANVDFASYHCQARDVRFKETLVYQTRVFEFDVINSGRVQLEFSWVSEDTSKAVSFAKPDHQGSAQKDQLSQGTMHTGSTLDSTMDHWAEGSPQPFSVEPSSGIVPVGKIQKFKVKFSPLDIGDFESNLFCQIPNLPPGEQGPVLVAKGRSTLPICHFDLKDSDYISGHQRNPELRGSSGGALDPNTRVIEFTTVGIGGKNLRTFTILNPTNSTYSFCWISEEIESLQNPAAFTCLTEKGFIHPEKKAEIVFQFTPFHLGITESSWTFLIPEHNITVPFLLVGKTTEPLISLNKSHLNFSSLLIGREARETVQIINKEEQGFDFSFQDNSRYSEGFSNSLLVCPMEGWIPPLSRFPIDIFFTPKQEGDVNFNLICNVEKKVHPVTLNVKAEGYTMNVEIKCKDRTGSITLLTPNQTNIINFYEVELNECVQCEFNFINTGKFTFSFQAQLCGSKTLLQYLEFSPIDSTVDVGQSVHATLSFQPLKKCVLTDLELIIKISHGPTFMCNISGCAVSPAIHFSFTSYNFGTCFIYQAGMPPYKQTLVITNKEETPMSIDCLYTNTTHLEVNSRVDVVKPGNTLEIPITFYPRESINYQELIPFEINGLSQQTVEIKGKGTKMKILVLDPANRIVKLGAVLPGQVVKRTVSIMNNSLAQLTFNQSILFTIPELQEPKVLTLAPFHNITLKPKEVCKLEVIFAPKKRVPPFSEEVFMECMGLLRPLFLLSGCCQALEISLDQEHIPFGPVVYQTQATRRILMMNTGDVGARFKWDIKKFEPHFSISPEEGYITSGMEVSFEVTYHPTEVGKESLCKNILCYIQGGSPLSLTLSGVCVGPPAVKEVVNFTCQVRSKHTQTILLSNRTNQTWNLHPIFEGEHWEGPEFITLEAHQQNKPYEITYRPRTMNLENRKHQGTLFFPLPDGTGWLYALHGTSELPKAVANIYREVPCKTPYTELLPITNWLNKPQRFRVIVEILKPEKPDLSITMKGLDYIDVLSGSKKDYKLNFFSHKEGTYAAKVIFRNEVTNEFLYYNVSFRVIPSGIIKTIEMVTPVRQVASASIKLENPLPYSVTFSTECRMPDIALPSQFVVPANSEGTFSFEFQPLKAGETFGRLTLHNTDLGYYQYELYLKATPALPEKPVHFQTVLGSSQIILVKFINYTRQRTEYYCRTDCTDFHAEKLINAAPGGQGGTEASVEVLFEPSHLGETKGILILSSLAGGEYIIPLFGMALPPKPQGPFSIRAGYSIIIPFKNVFYHMVTFSIIVDNPAFTIRAGESVRPKKINNITVSFEGNPSGSKTPITTKLTVSCPPGEGSETGVKWVYYLKGITL.

An interaction with KIF9 region spans residues 363-754 (EFFEECITDP…VLFSSPTPSG (392 aa)). Residues 956–967 (LSKKGRVKKGHA) are compositionally biased toward basic residues. Disordered regions lie at residues 956 to 987 (LSKK…SPVF), 1925 to 1951 (LAQE…TSLS), 2155 to 2186 (SKAD…LPPG), 2333 to 2459 (EQER…KFKT), 2482 to 2534 (LPPA…AERE), 2664 to 2684 (TNTT…KQKM), and 3852 to 3874 (KPDH…TGST). A coiled-coil region spans residues 1908 to 1933 (EIKKSKEEQMRAKYLENLAQENEEED). The segment covering 1936–1951 (SSDQGTSNSTKRTSLS) has biased composition (polar residues). Residues 2267–2365 (AQDYAAMKAQ…EDELKRRVKK (99 aa)) are a coiled coil. Composition is skewed to basic and acidic residues over residues 2333–2360 (EQER…DELK), 2393–2418 (VDVK…EELN), 2444–2453 (DNSKDPDKQL), 2489–2498 (EAPHEPDDQR), and 2509–2534 (KDRE…AERE). Positions 2504–2549 (GRRGRKDRERERLEKERTEKERLEREKAERERLEKLRALEERSDWE) form a coiled coil. Polar residues-rich tracts occupy residues 2664 to 2679 (TNTT…SSKG) and 3857 to 3874 (GSAQ…TGST).

In terms of assembly, interacts with KIF9.

Its subcellular location is the cell projection. The protein resides in the cilium. The protein localises to the cytoplasm. It is found in the cytoskeleton. It localises to the cilium axoneme. Its subcellular location is the flagellum. Functionally, required for ciliary motility. The protein is Hydrocephalus-inducing protein homolog (HYDIN) of Homo sapiens (Human).